The following is a 190-amino-acid chain: Elongation factor P-like protein (190 aa).

It belongs to the elongation factor P family.

In Erwinia tasmaniensis (strain DSM 17950 / CFBP 7177 / CIP 109463 / NCPPB 4357 / Et1/99), this protein is Elongation factor P-like protein.